A 419-amino-acid polypeptide reads, in one-letter code: tRNA modification GTPase MnmE (419 aa).

Arg-20, Glu-76, and Arg-115 together coordinate (6S)-5-formyl-5,6,7,8-tetrahydrofolate. Residues 211-348 form the TrmE-type G domain; it reads GYEVAIIGPP…LLDLVYDRLR (138 aa). Asn-221 serves as a coordination point for K(+). GTP-binding positions include 221 to 226, 240 to 246, and 265 to 268; these read NAGKST, SEIAGTT, and DTAG. Ser-225 is a binding site for Mg(2+). Positions 240, 242, and 245 each coordinate K(+). Position 246 (Thr-246) interacts with Mg(2+). Lys-419 is a (6S)-5-formyl-5,6,7,8-tetrahydrofolate binding site.

Belongs to the TRAFAC class TrmE-Era-EngA-EngB-Septin-like GTPase superfamily. TrmE GTPase family. As to quaternary structure, homodimer. Heterotetramer of two MnmE and two MnmG subunits. K(+) serves as cofactor.

The protein localises to the cytoplasm. Functionally, exhibits a very high intrinsic GTPase hydrolysis rate. Involved in the addition of a carboxymethylaminomethyl (cmnm) group at the wobble position (U34) of certain tRNAs, forming tRNA-cmnm(5)s(2)U34. This is tRNA modification GTPase MnmE from Paracoccus denitrificans (strain Pd 1222).